A 257-amino-acid chain; its full sequence is Outer dense fiber protein 4 (257 aa).

Residues 1–41 form a disordered region; it reads MDAEYSGNEFPRSEGERDQHQRPGKERKSGEAGWGTGELGQ. Residues 11–30 are compositionally biased toward basic and acidic residues; it reads PRSEGERDQHQRPGKERKSG. Position 64 is a phosphoserine (Ser64). The next 3 membrane-spanning stretches (helical) occupy residues 80–100, 152–172, and 179–199; these read AQVL…VVAF, VTFI…FELE, and IGWS…CAIL.

As to expression, expressed in testis and sperm; especially localized to sperm tail (at protein level).

It localises to the membrane. Component of the outer dense fibers (ODF) of spermatozoa which could be involved in sperm tail structure, sperm movement and general organization of cellular cytoskeleton. This chain is Outer dense fiber protein 4 (ODF4), found in Homo sapiens (Human).